The chain runs to 445 residues: GTPase Der (445 aa).

EngA-type G domains are found at residues 3-167 and 180-353; these read PVIA…YAGQ and VKIA…AAAM. GTP contacts are provided by residues 9 to 16, 56 to 60, 119 to 122, 186 to 193, 233 to 237, and 298 to 301; these read GRPNVGKS, DTGGF, NKAE, DTAGL, and NKWD. The region spanning 354 to 438 is the KH-like domain; the sequence is AKLPTPKLTR…PLRIEFRSST (85 aa).

This sequence belongs to the TRAFAC class TrmE-Era-EngA-EngB-Septin-like GTPase superfamily. EngA (Der) GTPase family. Associates with the 50S ribosomal subunit.

In terms of biological role, GTPase that plays an essential role in the late steps of ribosome biogenesis. The chain is GTPase Der from Paraburkholderia xenovorans (strain LB400).